The chain runs to 89 residues: Phasin PhaP (89 aa).

Helix regions lie at residues 3–26 (TQFFEEYQTQLLDWQKKFFSTWME) and 39–83 (DTFE…ALRQ).

In terms of assembly, homotetramer.

It is found in the cellular thylakoid membrane. The protein resides in the cytoplasm. It participates in biopolymer metabolism; poly-(R)-3-hydroxybutanoate biosynthesis. A phasin, it attaches to the polyhydroxybutyrate (PHB) granule surface regulating the number and size of PHB granules within a cell. It probably also acts as a regulator affecting the biosynthetic activity of PHB synthase in vivo. The polypeptide is Phasin PhaP (Synechocystis sp. (strain ATCC 27184 / PCC 6803 / Kazusa)).